Here is a 551-residue protein sequence, read N- to C-terminus: RanBD1 domain-containing protein C584.03c (551 aa).

In terms of domain architecture, RanBD1 spans 1–309; it reads MDELLNVASH…LLLKYADDET (309 aa). Ser441 is subject to Phosphoserine. A disordered region spans residues 522 to 551; the sequence is SVIPHSEPESSSKVINCQAKLNVEKEKKNP.

Its subcellular location is the nucleus. The chain is RanBD1 domain-containing protein C584.03c from Schizosaccharomyces pombe (strain 972 / ATCC 24843) (Fission yeast).